We begin with the raw amino-acid sequence, 974 residues long: UvrABC system protein A (974 aa).

Position 34–41 (34–41 (GLSGSGKS)) interacts with ATP. ABC transporter domains follow at residues 331 to 610 (WARS…TNSL) and 630 to 959 (ISKT…QFLK). 663 to 670 (GVSGGGKS) is a binding site for ATP. The C4-type zinc finger occupies 762-788 (CEACQGDGVIKIEMHFLPDVYVTCDVC).

This sequence belongs to the ABC transporter superfamily. UvrA family. In terms of assembly, forms a heterotetramer with UvrB during the search for lesions.

The protein localises to the cytoplasm. Functionally, the UvrABC repair system catalyzes the recognition and processing of DNA lesions. UvrA is an ATPase and a DNA-binding protein. A damage recognition complex composed of 2 UvrA and 2 UvrB subunits scans DNA for abnormalities. When the presence of a lesion has been verified by UvrB, the UvrA molecules dissociate. The sequence is that of UvrABC system protein A from Brucella suis biovar 1 (strain 1330).